The sequence spans 507 residues: Peroxisomal membrane protein PEX14 (507 aa).

Polar residues-rich tracts occupy residues methionine 1–proline 10 and glutamate 32–lysine 48. Residues methionine 1 to proline 52 are disordered. Over methionine 1–tryptophan 152 the chain is Peroxisomal. Involved in interaction with PEX5 regions lie at residues isoleucine 58–leucine 65 and arginine 78–arginine 97. A helical transmembrane segment spans residues tyrosine 153–isoleucine 173. Residues lysine 174 to asparagine 507 are Cytoplasmic-facing. Polar residues predominate over residues valine 288–aspartate 302. 4 disordered regions span residues valine 288–tyrosine 329, asparagine 344–serine 394, alanine 409–proline 435, and proline 448–asparagine 507. Residues alanine 308–alanine 322 show a composition bias toward low complexity. Over residues glutamine 378–serine 394 the composition is skewed to polar residues.

The protein belongs to the peroxin-14 family. As to quaternary structure, interacts with PEX13; forming the PEX13-PEX14 docking complex. Interacts with PEX5 (via WxxxF/Y motifs). Expressed in flowers, siliques, leaves and roots.

Its subcellular location is the peroxisome membrane. Its function is as follows. Component of the PEX13-PEX14 docking complex, a translocon channel that specifically mediates the import of peroxisomal cargo proteins bound to PEX5 receptor. The PEX13-PEX14 docking complex forms a large import pore which can be opened to a diameter of about 9 nm. Mechanistically, PEX5 receptor along with cargo proteins associates with the PEX14 subunit of the PEX13-PEX14 docking complex in the cytosol, leading to the insertion of the receptor into the organelle membrane with the concomitant translocation of the cargo into the peroxisome matrix. The protein is Peroxisomal membrane protein PEX14 of Arabidopsis thaliana (Mouse-ear cress).